A 165-amino-acid chain; its full sequence is Endoribonuclease YbeY (165 aa).

3 residues coordinate Zn(2+): histidine 130, histidine 134, and histidine 140.

It belongs to the endoribonuclease YbeY family. Zn(2+) is required as a cofactor.

It is found in the cytoplasm. In terms of biological role, single strand-specific metallo-endoribonuclease involved in late-stage 70S ribosome quality control and in maturation of the 3' terminus of the 16S rRNA. The chain is Endoribonuclease YbeY from Streptococcus thermophilus (strain CNRZ 1066).